The primary structure comprises 697 residues: Elongation factor G (697 aa).

The region spanning 8 to 287 (ERVRNIGIAA…AVVDYLPAPT (280 aa)) is the tr-type G domain. Residues 17–24 (AHIDAGKT), 81–85 (DTPGH), and 135–138 (NKMD) contribute to the GTP site.

The protein belongs to the TRAFAC class translation factor GTPase superfamily. Classic translation factor GTPase family. EF-G/EF-2 subfamily.

The protein localises to the cytoplasm. Its function is as follows. Catalyzes the GTP-dependent ribosomal translocation step during translation elongation. During this step, the ribosome changes from the pre-translocational (PRE) to the post-translocational (POST) state as the newly formed A-site-bound peptidyl-tRNA and P-site-bound deacylated tRNA move to the P and E sites, respectively. Catalyzes the coordinated movement of the two tRNA molecules, the mRNA and conformational changes in the ribosome. The polypeptide is Elongation factor G (fusA) (Arthrospira platensis (Spirulina platensis)).